The sequence spans 189 residues: Apolipoprotein D (189 aa).

Residues 1–20 (MVMLLLLLSALAGLFGAAEG) form the signal peptide. Gln-21 carries the post-translational modification Pyrrolidone carboxylic acid. 2 disulfide bridges follow: Cys-28-Cys-134 and Cys-61-Cys-185. N-linked (GlcNAc...) (complex) asparagine glycans are attached at residues Asn-65 and Asn-98.

Belongs to the calycin superfamily. Lipocalin family. As to quaternary structure, homodimer. In plasma, also exists as a disulfide-linked heterodimer with APOA2. In terms of processing, N-glycosylated. N-glycan heterogeneity at Asn-65: Hex5HexNAc4 (major) and Hex6HexNAc5 (minor); at Asn-98: Hex5HexNAc4 (minor), dHex1Hex5HexNAc4 (major), dHex1Hex6HexNAc5 (minor) and dHex1Hex7HexNAc6 (minor). In terms of tissue distribution, expressed in liver, intestine, pancreas, kidney, placenta, adrenal, spleen, fetal brain tissue and tears.

It is found in the secreted. Functionally, APOD occurs in the macromolecular complex with lecithin-cholesterol acyltransferase. It is probably involved in the transport and binding of bilin. Appears to be able to transport a variety of ligands in a number of different contexts. This is Apolipoprotein D (APOD) from Homo sapiens (Human).